A 448-amino-acid polypeptide reads, in one-letter code: Ribosomal protein uS12 methylthiotransferase RimO (448 aa).

The region spanning 16 to 126 (PRISFVSLGC…VVAAVHEAVP (111 aa)) is the MTTase N-terminal domain. Residues Cys25, Cys61, Cys90, Cys157, Cys161, and Cys164 each contribute to the [4Fe-4S] cluster site. Residues 143-380 (LTPRHYAYLK…MEAQSHVSLR (238 aa)) enclose the Radical SAM core domain. Positions 383 to 448 (RAKVGKRLSV…DAYDLHGIAV (66 aa)) constitute a TRAM domain.

It belongs to the methylthiotransferase family. RimO subfamily. Requires [4Fe-4S] cluster as cofactor.

The protein localises to the cytoplasm. It carries out the reaction L-aspartate(89)-[ribosomal protein uS12]-hydrogen + (sulfur carrier)-SH + AH2 + 2 S-adenosyl-L-methionine = 3-methylsulfanyl-L-aspartate(89)-[ribosomal protein uS12]-hydrogen + (sulfur carrier)-H + 5'-deoxyadenosine + L-methionine + A + S-adenosyl-L-homocysteine + 2 H(+). Catalyzes the methylthiolation of an aspartic acid residue of ribosomal protein uS12. The chain is Ribosomal protein uS12 methylthiotransferase RimO from Methylorubrum extorquens (strain PA1) (Methylobacterium extorquens).